Consider the following 457-residue polypeptide: Ribosomal protein uS12 methylthiotransferase RimO (457 aa).

The region spanning 6–116 (PKVGFVSLGC…VMEAVHAALP (111 aa)) is the MTTase N-terminal domain. The [4Fe-4S] cluster site is built by Cys15, Cys51, Cys80, Cys147, Cys151, and Cys154. The region spanning 133 to 371 (LTPRHYAYLK…AKQAQISALR (239 aa)) is the Radical SAM core domain. The TRAM domain maps to 373–441 (ESKIGSVQQC…EHDLFGDALP (69 aa)).

This sequence belongs to the methylthiotransferase family. RimO subfamily. [4Fe-4S] cluster is required as a cofactor.

It localises to the cytoplasm. It catalyses the reaction L-aspartate(89)-[ribosomal protein uS12]-hydrogen + (sulfur carrier)-SH + AH2 + 2 S-adenosyl-L-methionine = 3-methylsulfanyl-L-aspartate(89)-[ribosomal protein uS12]-hydrogen + (sulfur carrier)-H + 5'-deoxyadenosine + L-methionine + A + S-adenosyl-L-homocysteine + 2 H(+). Functionally, catalyzes the methylthiolation of an aspartic acid residue of ribosomal protein uS12. This Xanthomonas axonopodis pv. citri (strain 306) protein is Ribosomal protein uS12 methylthiotransferase RimO.